Reading from the N-terminus, the 334-residue chain is N-acetyl-gamma-glutamyl-phosphate reductase (334 aa).

Cysteine 145 is a catalytic residue. The tract at residues 173–192 (GISGSGQDPTEGTHYPNVTQ) is disordered.

This sequence belongs to the NAGSA dehydrogenase family. Type 1 subfamily.

The protein localises to the cytoplasm. The catalysed reaction is N-acetyl-L-glutamate 5-semialdehyde + phosphate + NADP(+) = N-acetyl-L-glutamyl 5-phosphate + NADPH + H(+). It participates in amino-acid biosynthesis; L-arginine biosynthesis; N(2)-acetyl-L-ornithine from L-glutamate: step 3/4. Catalyzes the NADPH-dependent reduction of N-acetyl-5-glutamyl phosphate to yield N-acetyl-L-glutamate 5-semialdehyde. The chain is N-acetyl-gamma-glutamyl-phosphate reductase from Methanocella arvoryzae (strain DSM 22066 / NBRC 105507 / MRE50).